A 413-amino-acid chain; its full sequence is Protein trichome birefringence-like 31 (413 aa).

Residues 12–34 traverse the membrane as a helical; Signal-anchor for type II membrane protein segment; sequence IQSIFQVVLVSLLVLGSVRWILD. The GDS motif signature appears at 141–143; it reads GDS. The DCXHWCLPGXXDXWN motif signature appears at 384-398; it reads DCIHWCLPGVPDTWN.

This sequence belongs to the PC-esterase family. TBL subfamily.

It is found in the membrane. Its function is as follows. May act as a bridging protein that binds pectin and other cell wall polysaccharides. Probably involved in maintaining esterification of pectins. May be involved in the specific O-acetylation of cell wall polymers. The polypeptide is Protein trichome birefringence-like 31 (TBL31) (Arabidopsis thaliana (Mouse-ear cress)).